Consider the following 1324-residue polypeptide: Myotubularin-related protein DDB_G0290005 (1324 aa).

Positions lysine 140 to threonine 276 are disordered. Residues asparagine 144–threonine 180 are compositionally biased toward low complexity. Over residues aspartate 181–glutamine 194 the composition is skewed to polar residues. A compositionally biased stretch (low complexity) spans asparagine 195 to asparagine 222. The span at serine 223–glutamate 247 shows a compositional bias: polar residues. Over residues serine 248 to threonine 276 the composition is skewed to low complexity. The region spanning glycine 349–phenylalanine 807 is the Myotubularin phosphatase domain. Substrate-binding positions include asparagine 514 to isoleucine 515, cysteine 575 to arginine 581, and arginine 621. The active-site Phosphocysteine intermediate is the cysteine 575. Disordered regions lie at residues glutamine 624 to serine 664, glutamine 841 to glutamate 1043, glutamate 1066 to threonine 1110, arginine 1144 to proline 1213, and leucine 1232 to serine 1296. Low complexity-rich tracts occupy residues serine 625–serine 664 and glycine 852–serine 864. Over residues serine 865 to lysine 882 the composition is skewed to basic residues. A compositionally biased stretch (basic and acidic residues) spans serine 883–serine 894. Low complexity-rich tracts occupy residues serine 899–serine 914 and threonine 927–proline 973. Over residues aspartate 988–glutamine 1002 the composition is skewed to basic and acidic residues. Positions methionine 1005–asparagine 1024 are enriched in polar residues. Residues serine 1020 to isoleucine 1195 are a coiled coil. Residues glutamine 1025–glutamate 1043 show a composition bias toward low complexity. Residues proline 1079 to aspartate 1090 are compositionally biased toward polar residues. Residues serine 1091–glutamine 1109 show a composition bias toward low complexity. The span at arginine 1144–alanine 1193 shows a compositional bias: basic and acidic residues. A compositionally biased stretch (polar residues) spans proline 1234–threonine 1243. Low complexity-rich tracts occupy residues asparagine 1244–asparagine 1258 and serine 1265–asparagine 1294.

It belongs to the protein-tyrosine phosphatase family. Non-receptor class myotubularin subfamily.

It is found in the cytoplasm. Phosphatase that acts on lipids with a phosphoinositol headgroup. This is Myotubularin-related protein DDB_G0290005 from Dictyostelium discoideum (Social amoeba).